The chain runs to 696 residues: DNA-directed RNA polymerase subunit beta' (696 aa).

The Zn(2+) site is built by C69, C71, C87, and C90. Positions 504, 506, and 508 each coordinate Mg(2+).

This sequence belongs to the RNA polymerase beta' chain family. RpoC1 subfamily. As to quaternary structure, in plastids the minimal PEP RNA polymerase catalytic core is composed of four subunits: alpha, beta, beta', and beta''. When a (nuclear-encoded) sigma factor is associated with the core the holoenzyme is formed, which can initiate transcription. Mg(2+) serves as cofactor. It depends on Zn(2+) as a cofactor.

It is found in the plastid. Its subcellular location is the chloroplast. The catalysed reaction is RNA(n) + a ribonucleoside 5'-triphosphate = RNA(n+1) + diphosphate. In terms of biological role, DNA-dependent RNA polymerase catalyzes the transcription of DNA into RNA using the four ribonucleoside triphosphates as substrates. The chain is DNA-directed RNA polymerase subunit beta' from Pinus thunbergii (Japanese black pine).